The sequence spans 398 residues: 1-deoxy-D-xylulose 5-phosphate reductoisomerase (398 aa).

Threonine 11, glycine 12, serine 13, isoleucine 14, and asparagine 125 together coordinate NADPH. Lysine 126 serves as a coordination point for 1-deoxy-D-xylulose 5-phosphate. An NADPH-binding site is contributed by glutamate 127. Aspartate 151 contacts Mn(2+). 1-deoxy-D-xylulose 5-phosphate contacts are provided by serine 152, glutamate 153, serine 186, and histidine 209. Glutamate 153 serves as a coordination point for Mn(2+). Glycine 215 provides a ligand contact to NADPH. 1-deoxy-D-xylulose 5-phosphate is bound by residues serine 222, asparagine 227, lysine 228, and glutamate 231. Glutamate 231 serves as a coordination point for Mn(2+).

The protein belongs to the DXR family. It depends on Mg(2+) as a cofactor. The cofactor is Mn(2+).

It carries out the reaction 2-C-methyl-D-erythritol 4-phosphate + NADP(+) = 1-deoxy-D-xylulose 5-phosphate + NADPH + H(+). It functions in the pathway isoprenoid biosynthesis; isopentenyl diphosphate biosynthesis via DXP pathway; isopentenyl diphosphate from 1-deoxy-D-xylulose 5-phosphate: step 1/6. Its function is as follows. Catalyzes the NADPH-dependent rearrangement and reduction of 1-deoxy-D-xylulose-5-phosphate (DXP) to 2-C-methyl-D-erythritol 4-phosphate (MEP). The protein is 1-deoxy-D-xylulose 5-phosphate reductoisomerase of Acinetobacter baumannii (strain ATCC 17978 / DSM 105126 / CIP 53.77 / LMG 1025 / NCDC KC755 / 5377).